The sequence spans 434 residues: Nicotinate phosphoribosyltransferase (434 aa).

Histidine 242 bears the Phosphohistidine; by autocatalysis mark.

It belongs to the NAPRTase family. In terms of processing, transiently phosphorylated on a His residue during the reaction cycle. Phosphorylation strongly increases the affinity for substrates and increases the rate of nicotinate D-ribonucleotide production. Dephosphorylation regenerates the low-affinity form of the enzyme, leading to product release.

It catalyses the reaction nicotinate + 5-phospho-alpha-D-ribose 1-diphosphate + ATP + H2O = nicotinate beta-D-ribonucleotide + ADP + phosphate + diphosphate. It functions in the pathway cofactor biosynthesis; NAD(+) biosynthesis; nicotinate D-ribonucleotide from nicotinate: step 1/1. Its function is as follows. Catalyzes the synthesis of beta-nicotinate D-ribonucleotide from nicotinate and 5-phospho-D-ribose 1-phosphate at the expense of ATP. This Rhizobium etli (strain CIAT 652) protein is Nicotinate phosphoribosyltransferase.